The chain runs to 366 residues: DNA replication and repair protein RecF (366 aa).

30–37 (GDNGMGKT) contributes to the ATP binding site.

The protein belongs to the RecF family.

It localises to the cytoplasm. In terms of biological role, the RecF protein is involved in DNA metabolism; it is required for DNA replication and normal SOS inducibility. RecF binds preferentially to single-stranded, linear DNA. It also seems to bind ATP. The sequence is that of DNA replication and repair protein RecF from Azobacteroides pseudotrichonymphae genomovar. CFP2.